Reading from the N-terminus, the 249-residue chain is Ubiquinone/menaquinone biosynthesis C-methyltransferase UbiE (249 aa).

S-adenosyl-L-methionine contacts are provided by residues Thr-72, Asp-93, and 121-122 (DA).

This sequence belongs to the class I-like SAM-binding methyltransferase superfamily. MenG/UbiE family.

It catalyses the reaction a 2-demethylmenaquinol + S-adenosyl-L-methionine = a menaquinol + S-adenosyl-L-homocysteine + H(+). The enzyme catalyses a 2-methoxy-6-(all-trans-polyprenyl)benzene-1,4-diol + S-adenosyl-L-methionine = a 5-methoxy-2-methyl-3-(all-trans-polyprenyl)benzene-1,4-diol + S-adenosyl-L-homocysteine + H(+). Its pathway is quinol/quinone metabolism; menaquinone biosynthesis; menaquinol from 1,4-dihydroxy-2-naphthoate: step 2/2. The protein operates within cofactor biosynthesis; ubiquinone biosynthesis. Functionally, methyltransferase required for the conversion of demethylmenaquinol (DMKH2) to menaquinol (MKH2) and the conversion of 2-polyprenyl-6-methoxy-1,4-benzoquinol (DDMQH2) to 2-polyprenyl-3-methyl-6-methoxy-1,4-benzoquinol (DMQH2). The sequence is that of Ubiquinone/menaquinone biosynthesis C-methyltransferase UbiE from Teredinibacter turnerae (strain ATCC 39867 / T7901).